Reading from the N-terminus, the 72-residue chain is ATP synthase subunit c (72 aa).

A run of 2 helical transmembrane segments spans residues methionine 1–isoleucine 21 and methionine 48–isoleucine 68.

This sequence belongs to the ATPase C chain family. In terms of assembly, F-type ATPases have 2 components, F(1) - the catalytic core - and F(0) - the membrane proton channel. F(1) has five subunits: alpha(3), beta(3), gamma(1), delta(1), epsilon(1). F(0) has three main subunits: a(1), b(2) and c(10-14). The alpha and beta chains form an alternating ring which encloses part of the gamma chain. F(1) is attached to F(0) by a central stalk formed by the gamma and epsilon chains, while a peripheral stalk is formed by the delta and b chains.

The protein resides in the cell membrane. F(1)F(0) ATP synthase produces ATP from ADP in the presence of a proton or sodium gradient. F-type ATPases consist of two structural domains, F(1) containing the extramembraneous catalytic core and F(0) containing the membrane proton channel, linked together by a central stalk and a peripheral stalk. During catalysis, ATP synthesis in the catalytic domain of F(1) is coupled via a rotary mechanism of the central stalk subunits to proton translocation. In terms of biological role, key component of the F(0) channel; it plays a direct role in translocation across the membrane. A homomeric c-ring of between 10-14 subunits forms the central stalk rotor element with the F(1) delta and epsilon subunits. The protein is ATP synthase subunit c of Bacillus caldotenax.